A 426-amino-acid chain; its full sequence is Adenylosuccinate synthetase (426 aa).

Residues 12 to 18 (GDEGKGK) and 40 to 42 (GHT) each bind GTP. The Proton acceptor role is filled by D13. D13 and G40 together coordinate Mg(2+). Residues 13–16 (DEGK), 38–41 (NAGH), T128, R142, Q223, T238, and R302 contribute to the IMP site. H41 functions as the Proton donor in the catalytic mechanism. 298–304 (TTTGRAR) contacts substrate. Residues R304, 330–332 (KLD), and 412–414 (SVG) contribute to the GTP site.

Belongs to the adenylosuccinate synthetase family. As to quaternary structure, homodimer. Requires Mg(2+) as cofactor.

It localises to the cytoplasm. The catalysed reaction is IMP + L-aspartate + GTP = N(6)-(1,2-dicarboxyethyl)-AMP + GDP + phosphate + 2 H(+). It participates in purine metabolism; AMP biosynthesis via de novo pathway; AMP from IMP: step 1/2. Functionally, plays an important role in the de novo pathway of purine nucleotide biosynthesis. Catalyzes the first committed step in the biosynthesis of AMP from IMP. This chain is Adenylosuccinate synthetase, found in Thermoanaerobacter pseudethanolicus (strain ATCC 33223 / 39E) (Clostridium thermohydrosulfuricum).